The chain runs to 397 residues: MIIKPRVRGFICVTTHPAGCAASVREQIAYVAGRGPIERGPKKVLVIGASTGYGLAARIAAAFGAGAATLGVFFERAPLDAKPGTAGWYNSAAFHDEAAALGLYAASINGDAFSDEIKQKTIDAIKRDLGQVDLVVYSVAAPRRTHPKTGITHQSTLKPIGQAVRLRGIDTDNEAIKETLLQPATPDEIAGTVAVMGGEDWRMWIDALDAAGVLADGAKTTAFTYLGEKVTHDIYWNGSIGEAKKDLDRTVLALRDKLAARGGDARVSVLKAVVTQASSAIPMMPLYLSLLFKVMKARGTHEGCIEQVDGLFRDSLYGAPPHVDAEGRLRADRLELDPAVQAQVLELWDRVTDDNLYALTDFAGYKTEFLRLFGFEIDGVDYDAHVDPNIRIPNLIE.

NAD(+) is bound by residues 48 to 53 (GASTGY), 74 to 75 (FE), 111 to 112 (DA), and 139 to 140 (VA). Tyrosine 225 serves as a coordination point for substrate. Tyrosine 235 serves as the catalytic Proton donor. NAD(+)-binding positions include lysine 244 and 273 to 275 (VVT).

This sequence belongs to the TER reductase family. As to quaternary structure, monomer.

The catalysed reaction is a 2,3-saturated acyl-[ACP] + NAD(+) = a (2E)-enoyl-[ACP] + NADH + H(+). It functions in the pathway lipid metabolism; fatty acid biosynthesis. Involved in the final reduction of the elongation cycle of fatty acid synthesis (FAS II). Catalyzes the reduction of a carbon-carbon double bond in an enoyl moiety that is covalently linked to an acyl carrier protein (ACP). This is Enoyl-[acyl-carrier-protein] reductase [NADH] from Burkholderia thailandensis (strain ATCC 700388 / DSM 13276 / CCUG 48851 / CIP 106301 / E264).